A 598-amino-acid chain; its full sequence is Aspartate--tRNA ligase (598 aa).

Residue Glu182 participates in L-aspartate binding. Residues 206-209 (QLFK) are aspartate. An L-aspartate-binding site is contributed by Arg228. Residues 228-230 (RDE) and Gln237 each bind ATP. His456 is a binding site for L-aspartate. Glu490 provides a ligand contact to ATP. An L-aspartate-binding site is contributed by Arg497. ATP is bound at residue 542 to 545 (GVDR).

This sequence belongs to the class-II aminoacyl-tRNA synthetase family. Type 1 subfamily. In terms of assembly, homodimer.

The protein localises to the cytoplasm. The enzyme catalyses tRNA(Asp) + L-aspartate + ATP = L-aspartyl-tRNA(Asp) + AMP + diphosphate. Its function is as follows. Catalyzes the attachment of L-aspartate to tRNA(Asp) in a two-step reaction: L-aspartate is first activated by ATP to form Asp-AMP and then transferred to the acceptor end of tRNA(Asp). This chain is Aspartate--tRNA ligase, found in Agathobacter rectalis (strain ATCC 33656 / DSM 3377 / JCM 17463 / KCTC 5835 / VPI 0990) (Eubacterium rectale).